Here is an 829-residue protein sequence, read N- to C-terminus: Periplasmic nitrate reductase (829 aa).

Positions Met1 to Ala29 form a signal peptide, tat-type signal. One can recognise a 4Fe-4S Mo/W bis-MGD-type domain in the interval Ile41–Asp97. Residues Cys48, Cys51, Cys55, and Cys83 each coordinate [4Fe-4S] cluster. Residues Lys85, Gln152, Asn177, Cys181, Trp214–Met221, Ser245–His249, Gln264–Asp266, Met374, Gln378, Asn484, Ser510–Asp511, Lys533, Asp560, and Thr718–Thr727 each bind Mo-bis(molybdopterin guanine dinucleotide). Phe794 is a binding site for substrate. Residues Asn802 and Lys819 each contribute to the Mo-bis(molybdopterin guanine dinucleotide) site.

It belongs to the prokaryotic molybdopterin-containing oxidoreductase family. NasA/NapA/NarB subfamily. Component of the periplasmic nitrate reductase NapAB complex composed of NapA and NapB. It depends on [4Fe-4S] cluster as a cofactor. Mo-bis(molybdopterin guanine dinucleotide) serves as cofactor. In terms of processing, predicted to be exported by the Tat system. The position of the signal peptide cleavage has not been experimentally proven.

The protein localises to the periplasm. The enzyme catalyses 2 Fe(II)-[cytochrome] + nitrate + 2 H(+) = 2 Fe(III)-[cytochrome] + nitrite + H2O. Functionally, catalytic subunit of the periplasmic nitrate reductase complex NapAB. Receives electrons from NapB and catalyzes the reduction of nitrate to nitrite. The protein is Periplasmic nitrate reductase of Vibrio atlanticus (strain LGP32) (Vibrio splendidus (strain Mel32)).